We begin with the raw amino-acid sequence, 86 residues long: Cell division topological specificity factor (86 aa).

Belongs to the MinE family.

In terms of biological role, prevents the cell division inhibition by proteins MinC and MinD at internal division sites while permitting inhibition at polar sites. This ensures cell division at the proper site by restricting the formation of a division septum at the midpoint of the long axis of the cell. The protein is Cell division topological specificity factor of Shewanella pealeana (strain ATCC 700345 / ANG-SQ1).